The primary structure comprises 255 residues: Alkaline ceramidase (255 aa).

Over 1-28 (MADGISSFWGPVTSTIECCEMNYAYSSY) the chain is Lumenal. The chain crosses the membrane as a helical span at residues 29 to 49 (IAEFYNTISNVPGILLALIGL). Topologically, residues 50 to 60 (VNALRQRFEKR) are cytoplasmic. A helical transmembrane segment spans residues 61–81 (FSILHISNMILAIGSMLYHAT). H79 provides a ligand contact to Zn(2+). The Lumenal segment spans residues 82–91 (LQHVQQQSDE). Residues 92-112 (TPMVWEILLYMYILYSPDWHY) form a helical membrane-spanning segment. Residues 113–118 (RSTMPT) are Cytoplasmic-facing. A run of 2 helical transmembrane segments spans residues 119-139 (FLFL…FGIG) and 140-160 (FKVH…KYYI). At 161–169 (HTEDTAAKR) the chain is on the cytoplasmic side. Residues 170 to 192 (IAKWYVATILVGSICWFCDRVFC) form a helical membrane-spanning segment. Over 193-205 (KTISQWPVNPQGH) the chain is Lumenal. Zn(2+)-binding residues include H205 and H209. A helical membrane pass occupies residues 206-226 (ALWHVFMSFNSYCANTFLMFC). Topologically, residues 227–255 (RAQQRGWNPKVKYFLGVLPYVKIEKPKTQ) are cytoplasmic.

The protein belongs to the alkaline ceramidase family. Zn(2+) is required as a cofactor. As to expression, mostly expressed in roots, shoot meristems and pollen, and, to a lower extent, in mature leaves.

The protein resides in the endoplasmic reticulum membrane. It is found in the golgi apparatus membrane. In terms of biological role, hydrolyzes only phytoceramide into phytosphingosine and free fatty acid. Does not have reverse activity. Affects plant morphogenesis. Required for the formation of wax layer that ensure cuticle permeability. Implicated in abscisic acid (ABA)-mediated stomatal closure. Involved in both biotic and abiotic stresses. Promotes salt resistance and defenses responses toward pathogenic bacteria (e.g. P.syringae) and against the fungal toxin fumonisin B1 (FB1). This is Alkaline ceramidase from Arabidopsis thaliana (Mouse-ear cress).